An 874-amino-acid polypeptide reads, in one-letter code: Probable inorganic carbon transporter subunit DabA (874 aa).

Positions 398, 400, 580, and 595 each coordinate Zn(2+).

It belongs to the inorganic carbon transporter (TC 9.A.2) DabA family. In terms of assembly, forms a complex with DabB. The cofactor is Zn(2+).

Its subcellular location is the cell membrane. Its function is as follows. Part of an energy-coupled inorganic carbon pump. The chain is Probable inorganic carbon transporter subunit DabA from Bacillus cereus (strain 03BB102).